Reading from the N-terminus, the 489-residue chain is Homoserine O-acetyltransferase (489 aa).

Residues Asn47–Glu354 form the AB hydrolase-1 domain. The Nucleophile role is filled by Ser152. Substrate is bound at residue Arg221. Active-site residues include Asp315 and His348. Asp349 is a substrate binding site. CBS domains are found at residues Met375–Glu434 and Met436–Phe489.

Belongs to the AB hydrolase superfamily. MetX family. In terms of assembly, homodimer.

Its subcellular location is the cytoplasm. The enzyme catalyses L-homoserine + acetyl-CoA = O-acetyl-L-homoserine + CoA. Its pathway is amino-acid biosynthesis; L-methionine biosynthesis via de novo pathway; O-acetyl-L-homoserine from L-homoserine: step 1/1. Transfers an acetyl group from acetyl-CoA to L-homoserine, forming acetyl-L-homoserine. The polypeptide is Homoserine O-acetyltransferase (Methanohalobium evestigatum (strain ATCC BAA-1072 / DSM 3721 / NBRC 107634 / OCM 161 / Z-7303)).